Here is a 476-residue protein sequence, read N- to C-terminus: FAD-dependent monooxygenase prhF (476 aa).

The FAD site is built by Glu-41, Gly-55, and Arg-114. Residue Tyr-222 is part of the active site. Residues Asp-314 and Ala-327 each contribute to the FAD site. Asn-343 is a glycosylation site (N-linked (GlcNAc...) asparagine). A helical transmembrane segment spans residues 447–467; the sequence is LGSTPIQMLTLLLPCLFYFMY. Asn-471 is a glycosylation site (N-linked (GlcNAc...) asparagine).

This sequence belongs to the paxM FAD-dependent monooxygenase family. FAD serves as cofactor.

The protein localises to the membrane. It functions in the pathway secondary metabolite biosynthesis; terpenoid biosynthesis. Functionally, FAD-dependent monooxygenase; part of the gene cluster that mediates the biosynthesis of paraherquonin, a meroterpenoid with a unique, highly congested hexacyclic molecular architecture. The first step of the pathway is the synthesis of 3,5-dimethylorsellinic acid (DMOA) by the polyketide synthase prhL. Synthesis of DMOA is followed by farnesylation by the prenyltransferase prhE, methylesterification by the methyl-transferase prhM, epoxidation of the prenyl chain by the flavin-dependent monooxygenase prhF, and cyclization of the farnesyl moiety by the terpene cyclase prhH, to yield the tetracyclic intermediate, protoaustinoid A. The short chain dehydrogenase prhI then oxidizes the C-3 alcohol group of the terpene cyclase product to transform protoaustinoid A into protoaustinoid B. The FAD-binding monooxygenase prhJ catalyzes the oxidation of protoaustinoid B into preaustinoid A which is further oxidized into preaustinoid A1 by FAD-binding monooxygenase phrK. Finally, prhA leads to berkeleydione via the berkeleyone B intermediate. PrhA is a multifunctional dioxygenase that first desaturates at C5-C6 to form berkeleyone B, followed by rearrangement of the A/B-ring to form the cycloheptadiene moiety in berkeleydione. Berkeleydione serves as the key intermediate for the biosynthesis of paraherquonin as well as many other meroterpenoids. The cytochrome P450 monooxygenases prhB, prhD, and prhN, as well as the isomerase prhC, are probably involved in the late stage of paraherquonin biosynthesis, after the production of berkeleydione. Especially prhC might be a multifunctional enzyme that catalyzes the D-ring expansion via intramolecular methoxy rearrangement, as well as the hydrolysis of the expanded D-ring. This is FAD-dependent monooxygenase prhF from Penicillium brasilianum.